Reading from the N-terminus, the 209-residue chain is Imidazole glycerol phosphate synthase subunit HisH (209 aa).

The 205-residue stretch at 1 to 205 (MIAIIDYGMG…QGVVEAWKSS (205 aa)) folds into the Glutamine amidotransferase type-1 domain. The active-site Nucleophile is Cys79. Active-site residues include His180 and Glu182.

Heterodimer of HisH and HisF.

It localises to the cytoplasm. The catalysed reaction is 5-[(5-phospho-1-deoxy-D-ribulos-1-ylimino)methylamino]-1-(5-phospho-beta-D-ribosyl)imidazole-4-carboxamide + L-glutamine = D-erythro-1-(imidazol-4-yl)glycerol 3-phosphate + 5-amino-1-(5-phospho-beta-D-ribosyl)imidazole-4-carboxamide + L-glutamate + H(+). It catalyses the reaction L-glutamine + H2O = L-glutamate + NH4(+). It participates in amino-acid biosynthesis; L-histidine biosynthesis; L-histidine from 5-phospho-alpha-D-ribose 1-diphosphate: step 5/9. Its function is as follows. IGPS catalyzes the conversion of PRFAR and glutamine to IGP, AICAR and glutamate. The HisH subunit catalyzes the hydrolysis of glutamine to glutamate and ammonia as part of the synthesis of IGP and AICAR. The resulting ammonia molecule is channeled to the active site of HisF. The protein is Imidazole glycerol phosphate synthase subunit HisH of Bacillus cereus (strain ATCC 14579 / DSM 31 / CCUG 7414 / JCM 2152 / NBRC 15305 / NCIMB 9373 / NCTC 2599 / NRRL B-3711).